Consider the following 440-residue polypeptide: MSKKFFIKTFGCQMNFNDSERIRGLLKTIGYEQTDNWEEADLIILNTCTIREKPDQKVLSHLGEYKKIKEKNPKALIAVAGCLAQRTGWELVKKAPVIDIMFSSFNMHQLPELINQAQAGYKAIAILDELPQDEDKIWEYPVERDNKYCAYVTIIKGCDKNCTYCVVPRTRGKERSRALHSILDEVKRLVDDGVREIHLLGQNVTAWGKDFEKPIPFSELLYQVSKIDGVERIRFTTGHPRDLTDDIIEAMADIPQVCNALHLPFQAGSNRILALMDRGYTKEEYLEKIEKLKEKVKDIAMSTDVIVGFPTETEEDFEHTLDVLKKVRFEQVFSFKFSPRPGTPAAEMEGQIPDDVKTERMRRLLELQKSILSEIAKKYEGTVQEVLVEEEKNGELIGRTTTNKWASFKGDPSLLGKIVKIKVIKSSPFSLEGELLEVIK.

The MTTase N-terminal domain occupies 3–119 (KKFFIKTFGC…LPELINQAQA (117 aa)). Residues Cys12, Cys48, Cys82, Cys158, Cys162, and Cys165 each coordinate [4Fe-4S] cluster. The 231-residue stretch at 144-374 (RDNKYCAYVT…LELQKSILSE (231 aa)) folds into the Radical SAM core domain. A TRAM domain is found at 377–437 (KKYEGTVQEV…PFSLEGELLE (61 aa)).

It belongs to the methylthiotransferase family. MiaB subfamily. Monomer. [4Fe-4S] cluster serves as cofactor.

It localises to the cytoplasm. It catalyses the reaction N(6)-dimethylallyladenosine(37) in tRNA + (sulfur carrier)-SH + AH2 + 2 S-adenosyl-L-methionine = 2-methylsulfanyl-N(6)-dimethylallyladenosine(37) in tRNA + (sulfur carrier)-H + 5'-deoxyadenosine + L-methionine + A + S-adenosyl-L-homocysteine + 2 H(+). Its function is as follows. Catalyzes the methylthiolation of N6-(dimethylallyl)adenosine (i(6)A), leading to the formation of 2-methylthio-N6-(dimethylallyl)adenosine (ms(2)i(6)A) at position 37 in tRNAs that read codons beginning with uridine. This chain is tRNA-2-methylthio-N(6)-dimethylallyladenosine synthase, found in Aquifex aeolicus (strain VF5).